We begin with the raw amino-acid sequence, 378 residues long: Chorismate synthase (378 aa).

Positions 37–60 are disordered; sequence EEEIQKDLTRRRPGQNDLTTPRDE. NADP(+) is bound at residue R47. FMN is bound by residues 124-126, G289, 304-308, and R330; these read RSS and KPTST.

Belongs to the chorismate synthase family. Homotetramer. It depends on FMNH2 as a cofactor.

It carries out the reaction 5-O-(1-carboxyvinyl)-3-phosphoshikimate = chorismate + phosphate. The protein operates within metabolic intermediate biosynthesis; chorismate biosynthesis; chorismate from D-erythrose 4-phosphate and phosphoenolpyruvate: step 7/7. Functionally, catalyzes the anti-1,4-elimination of the C-3 phosphate and the C-6 proR hydrogen from 5-enolpyruvylshikimate-3-phosphate (EPSP) to yield chorismate, which is the branch point compound that serves as the starting substrate for the three terminal pathways of aromatic amino acid biosynthesis. This reaction introduces a second double bond into the aromatic ring system. The chain is Chorismate synthase from Leptospira biflexa serovar Patoc (strain Patoc 1 / Ames).